A 300-amino-acid chain; its full sequence is Free fatty acid receptor 1 (300 aa).

Residues 1–8 (MDLPPQLS) lie on the Extracellular side of the membrane. The chain crosses the membrane as a helical span at residues 9-31 (FALYVSAFALGFPLNLLAIRGAV). Over 32 to 41 (SHAKLRLTPS) the chain is Cytoplasmic. Residues 42 to 64 (LVYTLHLACSDLLLAITLPLKAV) traverse the membrane as a helical segment. At 65 to 79 (EALASGVWPLPLPFC) the chain is on the extracellular side. Residues C79 and C170 are joined by a disulfide bond. Residues 80-101 (PVFALAHFAPLYAGGGFLAALS) form a helical membrane-spanning segment. Topologically, residues 102-121 (AGRYLGAAFPFGYQAIRRPC) are cytoplasmic. The helical transmembrane segment at 122–142 (YSWGVCVAIWALVLCHLGLAL) threads the bilayer. Over 143 to 178 (GLEAPRGWVDNTTSSLGINIPVNGSPVCLEAWDPDS) the chain is Extracellular. N153 carries N-linked (GlcNAc...) asparagine glycosylation. The chain crosses the membrane as a helical span at residues 179–200 (ARPARLSFSILLFFLPLVITAF). Topologically, residues 201 to 223 (CYVGCLRALVHSGLSHKRKLRAA) are cytoplasmic. A helical transmembrane segment spans residues 224–248 (WVAGGALLTLLLCLGPYNASNVASF). The Extracellular segment spans residues 249–256 (INPDLEGS). The chain crosses the membrane as a helical span at residues 257 to 279 (WRKLGLITGAWSVVLNPLVTGYL). Residues 280–300 (GTGPGQGTICVTRTPRGTIQK) are Cytoplasmic-facing.

This sequence belongs to the G-protein coupled receptor 1 family. In terms of tissue distribution, expressed abundantly in pancreatic beta cells.

It is found in the cell membrane. Functionally, G-protein coupled receptor for medium and long chain saturated and unsaturated fatty acids that plays an important role in glucose homeostasis. Fatty acid binding increases glucose-stimulated insulin secretion, and may also enhance the secretion of glucagon-like peptide 1 (GLP-1). May also play a role in bone homeostasis; receptor signaling activates pathways that inhibit osteoclast differentiation. Ligand binding leads to a conformation change that triggers signaling via G-proteins that activate phospholipase C, leading to an increase of the intracellular calcium concentration. Seems to act through a G(q) and G(i)-mediated pathway. Mediates the anti-inflammatory effects of omega-3 polyunsaturated fatty acids (PUFAs) via inhibition of NLRP3 inflammasome activation. The sequence is that of Free fatty acid receptor 1 (Ffar1) from Rattus norvegicus (Rat).